The primary structure comprises 64 residues: Enteric beta-defensin (64 aa).

A signal peptide spans 1–26 (MRLHHLLLTLLFLVLSAGSGFTQGIS). Cystine bridges form between Cys-31/Cys-60, Cys-38/Cys-53, and Cys-43/Cys-61.

The protein belongs to the beta-defensin family. LAP/TAP subfamily. In terms of tissue distribution, inducibly expressed in enteric epithelial cells.

The protein resides in the secreted. Its function is as follows. Has antibacterial activity. This is Enteric beta-defensin (EBD) from Bos taurus (Bovine).